A 432-amino-acid polypeptide reads, in one-letter code: MGRIGTPVFLAFLSALTCSLQVHAQVRDLKQCSNDPEFGRYCPTTCGVADVLSKYAKGVDEDSSFIDSVLTQLAAKHGIVEGNVNIVNEDVRITRDEAQIIKDSGQKTVQKILEEVRILEQIGVSHDAQIQELSEMWRVNQQFVTRLQQQLVDIRQTCSRSCQDTTANKISPITGKDCQQVVDNGGKDSGLYYIKPLKAKQPFLVFCEIENGNGWTVIQHRHDGSVNFTRDWVSYREGFGYLAPTLTTEFWLGNEKIHLLTGQQAYRLRIDLTDWENTHRYADYGHFKLTPESDEYRLFYSMYLDGDAGNAFDGFDFGDDPQDKFYTTHLGMLFSTPERDNDKYEGSCAEQDGSGWWMNRCHAGHLNGKYYFGGNYRKTDVEFPYDDGIIWATWHDRWYSLKMTTMKLLPMGRDLSGHGGQQQSKGNSRGDN.

The N-terminal stretch at 1-24 (MGRIGTPVFLAFLSALTCSLQVHA) is a signal peptide. In terms of domain architecture, Fibrinogen C-terminal spans 169 to 412 (KISPITGKDC…MTTMKLLPMG (244 aa)). Residues cysteine 178 and cysteine 207 are joined by a disulfide bond. An N-linked (GlcNAc...) asparagine glycan is attached at asparagine 227. Residues aspartate 340, aspartate 342, tyrosine 344, and glycine 346 each contribute to the Ca(2+) site. A disulfide bridge links cysteine 348 with cysteine 361. The disordered stretch occupies residues 413–432 (RDLSGHGGQQQSKGNSRGDN). Residues 421 to 432 (QQQSKGNSRGDN) show a composition bias toward polar residues.

Heterohexamer; disulfide linked. Contains 2 sets of 3 non-identical chains (alpha, beta and gamma). The 2 heterotrimers are in head to head conformation with the N-termini in a small central domain. Conversion of fibrinogen to fibrin is triggered by thrombin, which cleaves fibrinopeptides A and B from alpha and beta chains, and thus exposes the N-terminal polymerization sites responsible for the formation of the soft clot. The soft clot is converted into the hard clot by factor XIIIA which catalyzes the epsilon-(gamma-glutamyl)lysine cross-linking between gamma chains (stronger) and between alpha chains (weaker) of different monomers.

The protein localises to the secreted. Functionally, together with fibrinogen alpha (FGA) and fibrinogen beta (FGB), polymerizes to form an insoluble fibrin matrix. Has a major function in hemostasis as one of the primary components of blood clots. This chain is Fibrinogen gamma chain (FGG), found in Petromyzon marinus (Sea lamprey).